The following is a 182-amino-acid chain: Isopentenyl-diphosphate Delta-isomerase (182 aa).

Residues His25 and His32 each contribute to the Mn(2+) site. The Nudix hydrolase domain occupies 30–164 (LLHLAFSSWL…PWAFSPWMVM (135 aa)). Cys67 is an active-site residue. Position 67 (Cys67) interacts with Mg(2+). A Mn(2+)-binding site is contributed by His69. Residue Glu87 participates in Mg(2+) binding. Residues Glu114 and Glu116 each contribute to the Mn(2+) site. Residue Glu116 is part of the active site.

This sequence belongs to the IPP isomerase type 1 family. In terms of assembly, homodimer. Mg(2+) serves as cofactor. It depends on Mn(2+) as a cofactor.

The protein localises to the cytoplasm. It carries out the reaction isopentenyl diphosphate = dimethylallyl diphosphate. It participates in isoprenoid biosynthesis; dimethylallyl diphosphate biosynthesis; dimethylallyl diphosphate from isopentenyl diphosphate: step 1/1. Catalyzes the 1,3-allylic rearrangement of the homoallylic substrate isopentenyl (IPP) to its highly electrophilic allylic isomer, dimethylallyl diphosphate (DMAPP). The chain is Isopentenyl-diphosphate Delta-isomerase from Escherichia coli O6:H1 (strain CFT073 / ATCC 700928 / UPEC).